Consider the following 367-residue polypeptide: Heme A synthase (367 aa).

The next 5 membrane-spanning stretches (helical) occupy residues 26–46 (IRGW…VGGA), 111–131 (LLAR…WLTG), 139–159 (LPLL…WWMV), 174–194 (LATH…IYRG), and 212–232 (AGII…VAGL). H274 is a heme binding site. Helical transmembrane passes span 276–296 (AGAY…LRAA), 305–325 (SVLL…TLLL), and 327–347 (VPIV…GFAI). Residue H335 participates in heme binding.

Belongs to the COX15/CtaA family. Type 2 subfamily. Interacts with CtaB. It depends on heme b as a cofactor.

The protein localises to the cell membrane. The catalysed reaction is Fe(II)-heme o + 2 A + H2O = Fe(II)-heme a + 2 AH2. It functions in the pathway porphyrin-containing compound metabolism; heme A biosynthesis; heme A from heme O: step 1/1. Catalyzes the conversion of heme O to heme A by two successive hydroxylations of the methyl group at C8. The first hydroxylation forms heme I, the second hydroxylation results in an unstable dihydroxymethyl group, which spontaneously dehydrates, resulting in the formyl group of heme A. The protein is Heme A synthase of Sinorhizobium fredii (strain NBRC 101917 / NGR234).